A 142-amino-acid chain; its full sequence is Endoribonuclease YbeY (142 aa).

Positions 100, 104, and 110 each coordinate Zn(2+).

It belongs to the endoribonuclease YbeY family. It depends on Zn(2+) as a cofactor.

Its subcellular location is the cytoplasm. In terms of biological role, single strand-specific metallo-endoribonuclease involved in late-stage 70S ribosome quality control and in maturation of the 3' terminus of the 16S rRNA. This Helicobacter pylori (strain G27) protein is Endoribonuclease YbeY.